The primary structure comprises 171 residues: Ribosome maturation factor RimP (171 aa).

It belongs to the RimP family.

The protein resides in the cytoplasm. In terms of biological role, required for maturation of 30S ribosomal subunits. The chain is Ribosome maturation factor RimP from Anaeromyxobacter dehalogenans (strain 2CP-1 / ATCC BAA-258).